Here is a 384-residue protein sequence, read N- to C-terminus: tRNA-specific 2-thiouridylase MnmA (384 aa).

Residues 9 to 16 and methionine 35 each bind ATP; that span reads GMSGGVDS. The interval 95–97 is interaction with target base in tRNA; it reads NPD. The active-site Nucleophile is cysteine 100. The cysteines at positions 100 and 196 are disulfide-linked. ATP is bound at residue glycine 124. The segment at 146 to 148 is interaction with tRNA; sequence KDQ. Residue cysteine 196 is the Cysteine persulfide intermediate of the active site. An interaction with tRNA region spans residues 308-309; it reads RY.

The protein belongs to the MnmA/TRMU family.

The protein localises to the cytoplasm. It carries out the reaction S-sulfanyl-L-cysteinyl-[protein] + uridine(34) in tRNA + AH2 + ATP = 2-thiouridine(34) in tRNA + L-cysteinyl-[protein] + A + AMP + diphosphate + H(+). In terms of biological role, catalyzes the 2-thiolation of uridine at the wobble position (U34) of tRNA, leading to the formation of s(2)U34. The sequence is that of tRNA-specific 2-thiouridylase MnmA from Paraburkholderia phymatum (strain DSM 17167 / CIP 108236 / LMG 21445 / STM815) (Burkholderia phymatum).